We begin with the raw amino-acid sequence, 493 residues long: Alpha-amylase-related protein (493 aa).

The first 19 residues, 1–19, serve as a signal peptide directing secretion; it reads MFKLALTLTLCLAGSLSLA. Q20 is modified (pyrrolidone carboxylic acid). Cysteines 47 and 103 form a disulfide. Positions 117, 168, and 177 each coordinate Ca(2+). C156 and C170 are disulfide-bonded. Residue R205 participates in chloride binding. D207 functions as the Nucleophile in the catalytic mechanism. H211 is a Ca(2+) binding site. The active-site Proton donor is the E244. Chloride-binding residues include N307 and R342. 3 disulfide bridges follow: C375-C381, C417-C440, and C447-C459.

This sequence belongs to the glycosyl hydrolase 13 family. As to quaternary structure, monomer. Ca(2+) serves as cofactor. The cofactor is chloride.

The protein resides in the secreted. The enzyme catalyses Endohydrolysis of (1-&gt;4)-alpha-D-glucosidic linkages in polysaccharides containing three or more (1-&gt;4)-alpha-linked D-glucose units.. The protein is Alpha-amylase-related protein (Amyrel) of Drosophila teissieri (Fruit fly).